Here is a 269-residue protein sequence, read N- to C-terminus: MNNITRDIYTKGQPADLKRLLMKRNSFRRPLLNMRCNSVLQYSLEKRKLTVQDLKDTRMELNNMIRILTEAMAAHEWTVDNVNIADIQSLQSTIHSTLKNFQKINVLQLNINASDNSLAYLSKPEESYNFLTIYFSTLLSYEKVENLIKKSLTVIDSLYGLLNYQINAQHSLGCIPLNQDSFKQLKLLICILEEDIKLDDCGLEISASKNEYLEKIKTHYKTWLRIHTFLTLFPVPSVLSSNLKKQMYGWFEDLRDESLKSIILASLSE.

It localises to the mitochondrion. Its function is as follows. Has a role in meiosis. The polypeptide is Meiotically up-regulated gene 43 protein (mug43) (Schizosaccharomyces pombe (strain 972 / ATCC 24843) (Fission yeast)).